We begin with the raw amino-acid sequence, 303 residues long: Mycothiol acetyltransferase (303 aa).

N-acetyltransferase domains lie at 6–134 and 154–303; these read TSLA…VEGD and NEAY…QSSS. Position 37 (glutamate 37) interacts with 1D-myo-inositol 2-(L-cysteinylamino)-2-deoxy-alpha-D-glucopyranoside. Acetyl-CoA contacts are provided by residues 75-77 and 83-88; these read VVV and RQGYGS. 3 residues coordinate 1D-myo-inositol 2-(L-cysteinylamino)-2-deoxy-alpha-D-glucopyranoside: glutamate 180, lysine 221, and glutamate 233. Residues 237-239 and 244-250 contribute to the acetyl-CoA site; these read VGL and RRRGLGD. A 1D-myo-inositol 2-(L-cysteinylamino)-2-deoxy-alpha-D-glucopyranoside-binding site is contributed by tyrosine 271. 276 to 281 is a binding site for acetyl-CoA; sequence NESARR.

The protein belongs to the acetyltransferase family. MshD subfamily. Monomer.

The catalysed reaction is 1D-myo-inositol 2-(L-cysteinylamino)-2-deoxy-alpha-D-glucopyranoside + acetyl-CoA = mycothiol + CoA + H(+). Functionally, catalyzes the transfer of acetyl from acetyl-CoA to desacetylmycothiol (Cys-GlcN-Ins) to form mycothiol. This is Mycothiol acetyltransferase from Corynebacterium diphtheriae (strain ATCC 700971 / NCTC 13129 / Biotype gravis).